A 180-amino-acid polypeptide reads, in one-letter code: ATP synthase subunit delta (180 aa).

Belongs to the ATPase delta chain family. In terms of assembly, F-type ATPases have 2 components, F(1) - the catalytic core - and F(0) - the membrane proton channel. F(1) has five subunits: alpha(3), beta(3), gamma(1), delta(1), epsilon(1). F(0) has three main subunits: a(1), b(2) and c(10-14). The alpha and beta chains form an alternating ring which encloses part of the gamma chain. F(1) is attached to F(0) by a central stalk formed by the gamma and epsilon chains, while a peripheral stalk is formed by the delta and b chains.

The protein localises to the cell inner membrane. In terms of biological role, f(1)F(0) ATP synthase produces ATP from ADP in the presence of a proton or sodium gradient. F-type ATPases consist of two structural domains, F(1) containing the extramembraneous catalytic core and F(0) containing the membrane proton channel, linked together by a central stalk and a peripheral stalk. During catalysis, ATP synthesis in the catalytic domain of F(1) is coupled via a rotary mechanism of the central stalk subunits to proton translocation. Its function is as follows. This protein is part of the stalk that links CF(0) to CF(1). It either transmits conformational changes from CF(0) to CF(1) or is implicated in proton conduction. This is ATP synthase subunit delta from Legionella pneumophila (strain Paris).